The sequence spans 397 residues: Tryptophan synthase beta chain (397 aa).

At Lys-86 the chain carries N6-(pyridoxal phosphate)lysine.

The protein belongs to the TrpB family. As to quaternary structure, tetramer of two alpha and two beta chains. The cofactor is pyridoxal 5'-phosphate.

It carries out the reaction (1S,2R)-1-C-(indol-3-yl)glycerol 3-phosphate + L-serine = D-glyceraldehyde 3-phosphate + L-tryptophan + H2O. It participates in amino-acid biosynthesis; L-tryptophan biosynthesis; L-tryptophan from chorismate: step 5/5. The beta subunit is responsible for the synthesis of L-tryptophan from indole and L-serine. In Tolumonas auensis (strain DSM 9187 / NBRC 110442 / TA 4), this protein is Tryptophan synthase beta chain.